The following is a 303-amino-acid chain: D-alanine--D-alanine ligase (303 aa).

Residues 99–293 enclose the ATP-grasp domain; that stretch reads TYRFLKGTVE…FEELVEIILK (195 aa). 125–176 contributes to the ATP binding site; it reads GYPCVVKPRREGSSIGVFVCESDEEFQHALKEDLPRYGSVIVQKYIPGREMT. Residues D248, E260, and N262 each coordinate Mg(2+).

Belongs to the D-alanine--D-alanine ligase family. It depends on Mg(2+) as a cofactor. Requires Mn(2+) as cofactor.

The protein localises to the cytoplasm. It carries out the reaction 2 D-alanine + ATP = D-alanyl-D-alanine + ADP + phosphate + H(+). Its pathway is cell wall biogenesis; peptidoglycan biosynthesis. Cell wall formation. The sequence is that of D-alanine--D-alanine ligase from Thermotoga maritima (strain ATCC 43589 / DSM 3109 / JCM 10099 / NBRC 100826 / MSB8).